A 287-amino-acid polypeptide reads, in one-letter code: ATP synthase gamma chain (287 aa).

The protein belongs to the ATPase gamma chain family. As to quaternary structure, F-type ATPases have 2 components, CF(1) - the catalytic core - and CF(0) - the membrane proton channel. CF(1) has five subunits: alpha(3), beta(3), gamma(1), delta(1), epsilon(1). CF(0) has three main subunits: a, b and c.

It is found in the cell inner membrane. In terms of biological role, produces ATP from ADP in the presence of a proton gradient across the membrane. The gamma chain is believed to be important in regulating ATPase activity and the flow of protons through the CF(0) complex. This chain is ATP synthase gamma chain, found in Klebsiella pneumoniae subsp. pneumoniae (strain ATCC 700721 / MGH 78578).